Consider the following 303-residue polypeptide: GTPase Era (303 aa).

The 169-residue stretch at tyrosine 8–glutamate 176 folds into the Era-type G domain. The segment at glycine 16–serine 23 is G1. Glycine 16–serine 23 serves as a coordination point for GTP. Residues glutamine 42–histidine 46 are G2. The segment at aspartate 63–glycine 66 is G3. GTP-binding positions include aspartate 63–leucine 67 and asparagine 125–aspartate 128. The segment at asparagine 125–aspartate 128 is G4. The G5 stretch occupies residues isoleucine 155–alanine 157. A KH type-2 domain is found at leucine 207 to serine 284.

It belongs to the TRAFAC class TrmE-Era-EngA-EngB-Septin-like GTPase superfamily. Era GTPase family. As to quaternary structure, monomer.

The protein localises to the cytoplasm. It localises to the cell inner membrane. Functionally, an essential GTPase that binds both GDP and GTP, with rapid nucleotide exchange. Plays a role in 16S rRNA processing and 30S ribosomal subunit biogenesis and possibly also in cell cycle regulation and energy metabolism. The polypeptide is GTPase Era (Yersinia enterocolitica serotype O:8 / biotype 1B (strain NCTC 13174 / 8081)).